A 267-amino-acid polypeptide reads, in one-letter code: Thiamine pyrophosphokinase 2 (267 aa).

It belongs to the thiamine pyrophosphokinase family. In terms of tissue distribution, expressed in leaves and at lower levels in flowers.

The protein resides in the cytoplasm. It localises to the cytosol. It carries out the reaction thiamine + ATP = thiamine diphosphate + AMP + H(+). It participates in cofactor biosynthesis; thiamine diphosphate biosynthesis; thiamine diphosphate from thiamine: step 1/1. In terms of biological role, catalyzes the phosphorylation of thiamine to thiamine pyrophosphate (TPP). TPP is an active cofactor for enzymes involved in glycolysis and energy production. Plant leaves require high levels of TPP for photosynthesis and carbohydrate metabolism. The polypeptide is Thiamine pyrophosphokinase 2 (Arabidopsis thaliana (Mouse-ear cress)).